The chain runs to 363 residues: tRNA/tmRNA (uracil-C(5))-methyltransferase (363 aa).

Positions 187, 215, 220, 236, and 296 each coordinate S-adenosyl-L-methionine. C321 acts as the Nucleophile in catalysis. Residue E355 is the Proton acceptor of the active site.

Belongs to the class I-like SAM-binding methyltransferase superfamily. RNA M5U methyltransferase family. TrmA subfamily.

The catalysed reaction is uridine(54) in tRNA + S-adenosyl-L-methionine = 5-methyluridine(54) in tRNA + S-adenosyl-L-homocysteine + H(+). It carries out the reaction uridine(341) in tmRNA + S-adenosyl-L-methionine = 5-methyluridine(341) in tmRNA + S-adenosyl-L-homocysteine + H(+). Functionally, dual-specificity methyltransferase that catalyzes the formation of 5-methyluridine at position 54 (m5U54) in all tRNAs, and that of position 341 (m5U341) in tmRNA (transfer-mRNA). In Pseudomonas aeruginosa (strain LESB58), this protein is tRNA/tmRNA (uracil-C(5))-methyltransferase.